The primary structure comprises 245 residues: Uridylate kinase (245 aa).

12 to 15 (KLSG) is an ATP binding site. An involved in allosteric activation by GTP region spans residues 20 to 25 (GERGVG). Gly-54 lines the UMP pocket. Residues Gly-55 and Arg-59 each coordinate ATP. UMP-binding positions include Asp-74 and 135–142 (IGSPYFST). ATP contacts are provided by Asn-163, Tyr-169, and Asp-172.

The protein belongs to the UMP kinase family. In terms of assembly, homohexamer.

Its subcellular location is the cytoplasm. The enzyme catalyses UMP + ATP = UDP + ADP. It functions in the pathway pyrimidine metabolism; CTP biosynthesis via de novo pathway; UDP from UMP (UMPK route): step 1/1. Its activity is regulated as follows. Allosterically activated by GTP. Inhibited by UTP. In terms of biological role, catalyzes the reversible phosphorylation of UMP to UDP. The protein is Uridylate kinase of Streptococcus pneumoniae serotype 2 (strain D39 / NCTC 7466).